We begin with the raw amino-acid sequence, 353 residues long: NDGATILNLLDIVHPAAKTLVDIAKAQDDEVGDGTTSVCLLAGELLKESKYFIEEGMHPQIITKGYKEALKLALQFLHENAHSVADKNETEKREMLIKCAQTSLNSKLLAHYKEFFSELVVQAVETLETNLLDKDLIGIKMVTGGSVTDSFLVSGVAFKKTFSYAGFEQQPKKFNNPKICLLNIELELKAEKENAEIRIENPDDYKSIVDAEWELIYEKLRKIVESGANIVLSKLPIGDLATQYFADRNIFCAGRVDAEDMKRVQKSTGAIVQTTVNGLTEDVLGTCNQFEEVQIGAERYNLFKDCPHSKSATIILRGGAEQFIAEAERSLNDAIMIVRRCMKANKIVPGGGA.

This sequence belongs to the TCP-1 chaperonin family. As to quaternary structure, heterooligomeric complex of about 850 to 900 kDa that forms two stacked rings, 12 to 16 nm in diameter.

It is found in the cytoplasm. Its function is as follows. Molecular chaperone; assists the folding of proteins upon ATP hydrolysis. Known to play a role, in vitro, in the folding of actin and tubulin. This chain is T-complex protein 1 subunit eta, found in Tetrahymena thermophila.